The following is a 160-amino-acid chain: Transcriptional repressor NrdR (160 aa).

Residues 3 to 34 fold into a zinc finger; the sequence is CPYCQYEDTQVKDSRPAEEGAVIRRRRVCSVC. Residues 49-139 form the ATP-cone domain; sequence LLITKKNGRC…VYRDFRNASD (91 aa).

Belongs to the NrdR family. It depends on Zn(2+) as a cofactor.

In terms of biological role, negatively regulates transcription of bacterial ribonucleotide reductase nrd genes and operons by binding to NrdR-boxes. The protein is Transcriptional repressor NrdR of Bartonella tribocorum (strain CIP 105476 / IBS 506).